Reading from the N-terminus, the 110-residue chain is Putative UPF0377 protein YKL223W (110 aa).

Belongs to the UPF0377 family.

In Saccharomyces cerevisiae (strain ATCC 204508 / S288c) (Baker's yeast), this protein is Putative UPF0377 protein YKL223W.